A 280-amino-acid chain; its full sequence is Diaminopimelate epimerase (280 aa).

Positions 12, 45, and 65 each coordinate substrate. Catalysis depends on Cys74, which acts as the Proton donor. Residues 75 to 76, Asn163, Asn196, and 214 to 215 contribute to the substrate site; these read GN and ER. Cys223 acts as the Proton acceptor in catalysis. Residue 224-225 coordinates substrate; that stretch reads GT.

It belongs to the diaminopimelate epimerase family. Homodimer.

It is found in the cytoplasm. It catalyses the reaction (2S,6S)-2,6-diaminopimelate = meso-2,6-diaminopimelate. The protein operates within amino-acid biosynthesis; L-lysine biosynthesis via DAP pathway; DL-2,6-diaminopimelate from LL-2,6-diaminopimelate: step 1/1. Functionally, catalyzes the stereoinversion of LL-2,6-diaminopimelate (L,L-DAP) to meso-diaminopimelate (meso-DAP), a precursor of L-lysine and an essential component of the bacterial peptidoglycan. The sequence is that of Diaminopimelate epimerase from Shewanella sediminis (strain HAW-EB3).